The following is a 301-amino-acid chain: Phosphoribosylaminoimidazole-succinocarboxamide synthase (301 aa).

This sequence belongs to the SAICAR synthetase family.

It carries out the reaction 5-amino-1-(5-phospho-D-ribosyl)imidazole-4-carboxylate + L-aspartate + ATP = (2S)-2-[5-amino-1-(5-phospho-beta-D-ribosyl)imidazole-4-carboxamido]succinate + ADP + phosphate + 2 H(+). It participates in purine metabolism; IMP biosynthesis via de novo pathway; 5-amino-1-(5-phospho-D-ribosyl)imidazole-4-carboxamide from 5-amino-1-(5-phospho-D-ribosyl)imidazole-4-carboxylate: step 1/2. The chain is Phosphoribosylaminoimidazole-succinocarboxamide synthase from Syntrophobacter fumaroxidans (strain DSM 10017 / MPOB).